The sequence spans 272 residues: Cholesterol 25-hydroxylase (272 aa).

An N-linked (GlcNAc...) asparagine glycan is attached at N5. The next 3 helical transmembrane spans lie at F38–L58, L84–L104, and L121–V141. The Fatty acid hydroxylase domain maps to L129–T263. The Histidine box-1 motif lies at W142–H146. The short motif at H157–H161 is the Histidine box-2 element. N-linked (GlcNAc...) asparagine glycosylation is found at N163 and N189. The short motif at H238–S244 is the Histidine box-3 element.

This sequence belongs to the sterol desaturase family. Fe cation serves as cofactor. Post-translationally, N-glycosylated.

It localises to the endoplasmic reticulum membrane. It carries out the reaction cholesterol + AH2 + O2 = 25-hydroxycholesterol + A + H2O. The catalysed reaction is cholesterol + NADPH + O2 + H(+) = 25-hydroxycholesterol + NADP(+) + H2O. Catalyzes the formation of 25-hydroxycholesterol from cholesterol, leading to repress cholesterol biosynthetic enzymes. Plays a key role in cell positioning and movement in lymphoid tissues: 25-hydroxycholesterol is an intermediate in biosynthesis of 7-alpha,25-dihydroxycholesterol (7-alpha,25-OHC), an oxysterol that acts as a ligand for the G protein-coupled receptor GPR183/EBI2, a chemotactic receptor for a number of lymphoid cells. May play an important role in regulating lipid metabolism by synthesizing a corepressor that blocks sterol regulatory element binding protein (SREBP) processing. As an interferon-stimulated gene, has broad antiviral activities against a wide range of enveloped viruses, such as vesicular stomatitis virus (VSV) and SARS coronavirus-2 (SARS-CoV-2). Its product, 25-hydroxycholesterol, activates the ER-localized enzyme ACAT to induce internalization of accessible cholesterol on the plasma membrane and restricts SARS-CoV-2 S protein-mediated fusion which inhibits virus replication. In testis, production of 25-hydroxycholesterol by macrophages plays a role in Leydig cell differentiation. Required to restrain inflammation in macrophages: production of 25-hydroxycholesterol protects macrophages from cholesterol overload, thereby preventing mitochondrial DNA release and subsequent activation of the AIM2 inflammasome. In Homo sapiens (Human), this protein is Cholesterol 25-hydroxylase.